Here is a 264-residue protein sequence, read N- to C-terminus: 3-methyl-2-oxobutanoate hydroxymethyltransferase (264 aa).

The Mg(2+) site is built by D45 and D84. Residues 45 to 46, D84, and K112 each bind 3-methyl-2-oxobutanoate; that span reads DS. E114 provides a ligand contact to Mg(2+). E181 acts as the Proton acceptor in catalysis.

It belongs to the PanB family. Homodecamer; pentamer of dimers. The cofactor is Mg(2+).

It localises to the cytoplasm. The catalysed reaction is 3-methyl-2-oxobutanoate + (6R)-5,10-methylene-5,6,7,8-tetrahydrofolate + H2O = 2-dehydropantoate + (6S)-5,6,7,8-tetrahydrofolate. Its pathway is cofactor biosynthesis; (R)-pantothenate biosynthesis; (R)-pantoate from 3-methyl-2-oxobutanoate: step 1/2. In terms of biological role, catalyzes the reversible reaction in which hydroxymethyl group from 5,10-methylenetetrahydrofolate is transferred onto alpha-ketoisovalerate to form ketopantoate. The chain is 3-methyl-2-oxobutanoate hydroxymethyltransferase from Vibrio parahaemolyticus serotype O3:K6 (strain RIMD 2210633).